The sequence spans 372 residues: Cyclin-dependent kinase 9 (372 aa).

The 297-residue stretch at 19–315 (YEKLAKIGQG…SDDALNHDFF (297 aa)) folds into the Protein kinase domain. Position 25–33 (25–33 (IGQGTFGEV)) interacts with ATP. The residue at position 35 (K35) is a Phosphoserine. K44 bears the N6-acetyllysine; by EP300/CBP, PCAF/KAT2B and GCN5/KAT2A mark. K48 lines the ATP pocket. K48 is modified (N6-acetyllysine; by PCAF/KAT2B and GCN5/KAT2A). N54 is subject to Phosphothreonine. Position 104-106 (104-106 (DFC)) interacts with ATP. D149 functions as the Proton acceptor in the catalytic mechanism. The tract at residues 166-191 (ADFGLARAFSLAKNSQPNRYTNRVVT) is T-loop. Residue D167 coordinates ATP. S175 carries the phosphoserine modification. Residue T186 is modified to Phosphothreonine; by CaMK1D. A disordered region spans residues 343 to 372 (RRKGSQITQQSTNQSRNPATTNQTEFERVF). Position 347 is a phosphoserine; by CDK9 and PKA (S347). Residues 347 to 366 (SQITQQSTNQSRNPATTNQT) show a composition bias toward polar residues. T350 bears the Phosphothreonine; by CDK9 mark. S353 bears the Phosphoserine; by CDK9 mark. T354 bears the Phosphothreonine; by CDK9 mark. S357 bears the Phosphoserine; by CDK9 mark. A phosphothreonine; by CDK9 mark is found at T362 and T363.

Belongs to the protein kinase superfamily. CMGC Ser/Thr protein kinase family. CDC2/CDKX subfamily. In terms of assembly, component of the super elongation complex (SEC), at least composed of EAF1, EAF2, CDK9, MLLT3/AF9, AFF (AFF1 or AFF4), the P-TEFb complex and ELL (ELL, ELL2 or ELL3). Associates with CCNT1/cyclin-T1, CCNT2/cyclin-T2 (isoform A and isoform B) or CCNK/cyclin-K to form active P-TEFb. P-TEFb forms a complex with AFF4/AF5Q31 and is part of the super elongation complex (SEC). Component of a complex which is composed of at least 5 members: HTATSF1/Tat-SF1, P-TEFb complex, RNA pol II, SUPT5H and NCL/nucleolin. Associates with UBR5 and forms a transcription regulatory complex composed of CDK9, RNAP II, UBR5 and TFIIS/TCEA1 that can stimulate target gene transcription (e.g. gamma fibrinogen/FGG) by recruiting their promoters. Component of the 7SK snRNP inactive complex which is composed of at least 8 members: P-TEFb (composed of CDK9 and CCNT1/cyclin-T1), HEXIM1, HEXIM2, LARP7, BCDIN3, SART3 proteins and 7SK and U6 snRNAs. This inactive 7SK snRNP complex can also interact with NCOR1 and HDAC3, probably to regulate CDK9 acetylation. Release of P-TEFb from P-TEFb/7SK snRNP complex requires both PP2B to transduce calcium Ca(2+) signaling in response to stimuli (e.g. UV or hexamethylene bisacetamide (HMBA)) and PPP1CA to dephosphorylate Thr-186. This released P-TEFb remains inactive in the pre-initiation complex with BRD4 until new Thr-186 phosphorylation occurs after the synthesis of a short RNA. Interacts with BRD4; to target chromatin binding. Interacts with JMJD6. Interacts with activated nuclear STAT3 and RELA/p65. Binds to AR and MYOD1. Forms a complex composed of CDK9, CCNT1/cyclin-T1, EP300 and GATA4 that stimulates hypertrophy in cardiomyocytes. The large PER complex involved in the repression of transcriptional termination is composed of at least PER2, CDK9, DDX5, DHX9, NCBP1 and POLR2A. Interacts with HSF1. Interacts with TBX21. Isoform 3: binds to KU70/XRCC6. Interacts with WDR43. Interacts with ZMYND8; the association appears to occur between homodimeric ZMYND8 and the activated form of the P-TEFb complex. (Microbial infection) Interacts with the acidic/proline-rich region of HIV-1 and HIV-2 Tat via T-loop region and is thus required for HIV to hijack host transcription machinery during its replication through cooperative binding to viral TAR RNA. As to quaternary structure, (Microbial infection) Interacts with human herpes virus 1 (HHV-1) protein ICP22; this interaction blocks the recruitment of positive transcription elongation factor b (P-TEFb) to the viral promoter. Post-translationally, autophosphorylation at Thr-186, Ser-347, Thr-350, Ser-353, Thr-354 and Ser-357 triggers kinase activity by promoting cyclin and substrate binding (e.g. HIV TAT) upon conformational changes. Thr-186 phosphorylation requires the calcium Ca(2+) signaling pathway, including CaMK1D and calmodulin. This inhibition is relieved by Thr-29 dephosphorylation. However, phosphorylation at Thr-29 is inhibitory within the HIV transcription initiation complex. Phosphorylation at Ser-175 inhibits kinase activity. Can be phosphorylated on either Thr-362 or Thr-363 but not on both simultaneously. Dephosphorylation of Thr-186 by PPM1A and PPM1B blocks CDK9 activity and may lead to CDK9 proteasomal degradation. However, PPP1CA-mediated Thr-186 dephosphorylation is required to release P-TEFb from its inactive P-TEFb/7SK snRNP complex. Dephosphorylated at Ser-347 by the PNUTS-PP1 complex during RNA polymerase II transcription pause-release. Dephosphorylation of C-terminus Thr and Ser residues by protein phosphatase-1 (PP1) triggers CDK9 activity, contributing to the activation of HIV-1 transcription. In terms of processing, N6-acetylation of Lys-44 promotes kinase activity, whereas acetylation of both Lys-44 and Lys-48 mediated by PCAF/KAT2B and GCN5/KAT2A reduces kinase activity. The acetylated form associates with PML bodies in the nuclear matrix and with the transcriptionally silent HIV-1 genome; deacetylated upon transcription stimulation. Deacetylated by SIRT7, promoting the kinase activity and subsequent 'Ser-2' phosphorylation of the C-terminal domain (CTD) of RNA polymerase II. Post-translationally, polyubiquitinated and thus activated by UBR5. This ubiquitination is promoted by TFIIS/TCEA1 and favors 'Ser-2' phosphorylation of RPB1/POLR2A CTD. Ubiquitous.

The protein resides in the nucleus. It is found in the cytoplasm. The protein localises to the PML body. The enzyme catalyses L-seryl-[protein] + ATP = O-phospho-L-seryl-[protein] + ADP + H(+). The catalysed reaction is L-threonyl-[protein] + ATP = O-phospho-L-threonyl-[protein] + ADP + H(+). It carries out the reaction [DNA-directed RNA polymerase] + ATP = phospho-[DNA-directed RNA polymerase] + ADP + H(+). Inhibited by CDKI-71, CR8, GPC-286199, AG-024322, flavopiridol (alvocidib), RBG-286147, anilinopyrimidine 32, arylazopyrazole 31b, indirubin 3'-monoxime, meriolin 3,P276-00, olomoucine II, pyrazolotriazine, meriolin, variolin, thiazolyl-pyrimidine, thiazolyl-pyrimidine, indirubin-30-monoxime, ZK 304709, AG-012986, AT7519, R547, RGB-286638, imidazole pyrimidine, EXEL-3700, EXEL-8647, 5,6-dichloro-1-b-ribofur-anosyl-benzimidazole (DRB), P276-00, roscovitine (seliciclib, CYC202) and SNS-032 (BMS-387032). Activation by Thr-186 phosphorylation is calcium Ca(2+) signaling pathway-dependent; actively inactivated by dephosphorylation mediated by PPP1CA, PPM1A and PPM1B. Reversibly repressed by acetylation at Lys-44 and Lys-48. In terms of biological role, protein kinase involved in the regulation of transcription. Member of the cyclin-dependent kinase pair (CDK9/cyclin-T) complex, also called positive transcription elongation factor b (P-TEFb), which facilitates the transition from abortive to productive elongation by phosphorylating the CTD (C-terminal domain) of the large subunit of RNA polymerase II (RNAP II) POLR2A, SUPT5H and RDBP. This complex is inactive when in the 7SK snRNP complex form. Phosphorylates EP300, MYOD1, RPB1/POLR2A and AR and the negative elongation factors DSIF and NELFE. Regulates cytokine inducible transcription networks by facilitating promoter recognition of target transcription factors (e.g. TNF-inducible RELA/p65 activation and IL-6-inducible STAT3 signaling). Promotes RNA synthesis in genetic programs for cell growth, differentiation and viral pathogenesis. P-TEFb is also involved in cotranscriptional histone modification, mRNA processing and mRNA export. Modulates a complex network of chromatin modifications including histone H2B monoubiquitination (H2Bub1), H3 lysine 4 trimethylation (H3K4me3) and H3K36me3; integrates phosphorylation during transcription with chromatin modifications to control co-transcriptional histone mRNA processing. The CDK9/cyclin-K complex has also a kinase activity towards CTD of RNAP II and can substitute for CDK9/cyclin-T P-TEFb in vitro. Replication stress response protein; the CDK9/cyclin-K complex is required for genome integrity maintenance, by promoting cell cycle recovery from replication arrest and limiting single-stranded DNA amount in response to replication stress, thus reducing the breakdown of stalled replication forks and avoiding DNA damage. In addition, probable function in DNA repair of isoform 2 via interaction with KU70/XRCC6. Promotes cardiac myocyte enlargement. RPB1/POLR2A phosphorylation on 'Ser-2' in CTD activates transcription. AR phosphorylation modulates AR transcription factor promoter selectivity and cell growth. DSIF and NELF phosphorylation promotes transcription by inhibiting their negative effect. The phosphorylation of MYOD1 enhances its transcriptional activity and thus promotes muscle differentiation. Catalyzes phosphorylation of KAT5, promoting KAT5 recruitment to chromatin and histone acetyltransferase activity. This is Cyclin-dependent kinase 9 from Homo sapiens (Human).